A 187-amino-acid polypeptide reads, in one-letter code: Protein GrpE (187 aa).

The disordered stretch occupies residues 1–26 (MHDPKESLETNIQETESQEKLPETPI).

Belongs to the GrpE family. Homodimer.

It localises to the cytoplasm. Participates actively in the response to hyperosmotic and heat shock by preventing the aggregation of stress-denatured proteins, in association with DnaK and GrpE. It is the nucleotide exchange factor for DnaK and may function as a thermosensor. Unfolded proteins bind initially to DnaJ; upon interaction with the DnaJ-bound protein, DnaK hydrolyzes its bound ATP, resulting in the formation of a stable complex. GrpE releases ADP from DnaK; ATP binding to DnaK triggers the release of the substrate protein, thus completing the reaction cycle. Several rounds of ATP-dependent interactions between DnaJ, DnaK and GrpE are required for fully efficient folding. This is Protein GrpE from Dichelobacter nodosus (strain VCS1703A).